The following is a 203-amino-acid chain: Mitotic spindle checkpoint component mad2 (203 aa).

The region spanning 13-197 (KGSSKLVSEF…TSMHKIDCQV (185 aa)) is the HORMA domain.

It belongs to the MAD2 family. In terms of assembly, interacts with mad3 and slp1.

It is found in the nucleus. In terms of biological role, feedback control that prevents cells with incompletely assembled spindles from leaving mitosis. It interacts with the anaphase promoting complex/cyclosome (APC/C) thereby inhibiting APC/C-dependent proteolysis, a step required for exit from mitosis. The chain is Mitotic spindle checkpoint component mad2 from Schizosaccharomyces pombe (strain 972 / ATCC 24843) (Fission yeast).